We begin with the raw amino-acid sequence, 297 residues long: Acetylglutamate kinase (297 aa).

Residues 73 to 74, arginine 95, and asparagine 188 contribute to the substrate site; that span reads GG.

This sequence belongs to the acetylglutamate kinase family. ArgB subfamily.

The protein resides in the cytoplasm. It catalyses the reaction N-acetyl-L-glutamate + ATP = N-acetyl-L-glutamyl 5-phosphate + ADP. It functions in the pathway amino-acid biosynthesis; L-arginine biosynthesis; N(2)-acetyl-L-ornithine from L-glutamate: step 2/4. Catalyzes the ATP-dependent phosphorylation of N-acetyl-L-glutamate. The sequence is that of Acetylglutamate kinase from Trichormus variabilis (strain ATCC 29413 / PCC 7937) (Anabaena variabilis).